Reading from the N-terminus, the 947-residue chain is Ionotropic receptor 25a (947 aa).

An N-terminal signal peptide occupies residues 1-30 (MILMNPKTSKILWLLGFLSLLSSFSLEIAA). At 31–562 (QTTQNINVLF…SLFKFLTVLE (532 aa)) the chain is on the extracellular side. N-linked (GlcNAc...) asparagine glycosylation is found at N78, N177, N277, and N434. A helical membrane pass occupies residues 563–583 (TNVWLCILAAYFFTSFLMWIF). Residues 584 to 641 (DRWSPYSYQNNREKYKDDEEKREFNLKECLWFCMTSLTPQGGGEAPKNLSGRLVAATW) lie on the Cytoplasmic side of the membrane. A helical membrane pass occupies residues 642–662 (WLFGFIIIASYTANLAAFLTV). The Extracellular portion of the chain corresponds to 663-858 (SRLDTPVESL…DQSDGISIQN (196 aa)). 3 N-linked (GlcNAc...) asparagine glycosylation sites follow: N687, N715, and N762. The helical transmembrane segment at 859–879 (IGGVFIVIFVGIGMACITLVF) threads the bilayer. The Cytoplasmic segment spans residues 880–947 (EYWWYRYRKN…QYPATFKPRF (68 aa)).

It belongs to the glutamate-gated ion channel (TC 1.A.10.1) family. In terms of assembly, interacts with nocte. In terms of tissue distribution, in the antenna, detected in neurons of the arista and also detected in sacculus neurons which innervate the first and second chambers (at protein level). Throughout the main body of the antenna, expressed in neurons which innervate the coeloconic class of olfactory sensilla (at protein level). Expressed in multiple cells of the dorsal organ including the dorsal organ cool cells (at protein level). Detected in femur and retina. Expressed in a subset of femur chordonotal neurons and antennal Johnston's Organ neurons.

Its subcellular location is the cell membrane. It is found in the cell projection. The protein localises to the axon. It localises to the dendrite. The protein resides in the perikaryon. Its subcellular location is the cilium. Integral part of various neural sensory systems in the antenna that provide the neural basis for the response to environmental changes in temperature (thermosensation), humidity (hygrosensation) and odor detection. Required for odor-evoked electrophysiological responses in multiple neuron classes in the antenna and is likely to function as part of an olfactory receptor complex with Ir76a and Ir76b. Together with Ir21a and Ir93a, mediates the response of the larval dorsal organ cool cells, a trio of cool-responsive neurons, to cooling and is required for cool avoidance behavior. Required in chordonotal organ neurons for behavioral synchronization to low-amplitude temperature cycles and mediates circadian clock resetting by temperature. Together with Ir40a and Ir93a, mediates the response of the hydrosensory sacculus neurons to changes in relative humidity, and is required for dry detection and humidiy preference behavior. The protein is Ionotropic receptor 25a of Drosophila melanogaster (Fruit fly).